A 405-amino-acid polypeptide reads, in one-letter code: Molybdopterin molybdenumtransferase 2 (405 aa).

The protein belongs to the MoeA family. The cofactor is Mg(2+).

It carries out the reaction adenylyl-molybdopterin + molybdate = Mo-molybdopterin + AMP + H(+). It functions in the pathway cofactor biosynthesis; molybdopterin biosynthesis. In terms of biological role, catalyzes the insertion of molybdate into adenylated molybdopterin with the concomitant release of AMP. The polypeptide is Molybdopterin molybdenumtransferase 2 (moaE2) (Mycobacterium tuberculosis (strain CDC 1551 / Oshkosh)).